The primary structure comprises 466 residues: Ribosomal protein uS12 methylthiotransferase RimO (466 aa).

The MTTase N-terminal domain maps to 16–127 (PKVAFAHLGC…IVDVLQRVEA (112 aa)). Cys25, Cys61, Cys90, Cys165, Cys169, and Cys172 together coordinate [4Fe-4S] cluster. Residues 151–380 (TTDQAVAYLK…MALQQPIAAE (230 aa)) enclose the Radical SAM core domain. The TRAM domain maps to 383–454 (QRWVGKTVDV…IYDLTGHIVG (72 aa)).

It belongs to the methylthiotransferase family. RimO subfamily. It depends on [4Fe-4S] cluster as a cofactor.

The protein resides in the cytoplasm. It carries out the reaction L-aspartate(89)-[ribosomal protein uS12]-hydrogen + (sulfur carrier)-SH + AH2 + 2 S-adenosyl-L-methionine = 3-methylsulfanyl-L-aspartate(89)-[ribosomal protein uS12]-hydrogen + (sulfur carrier)-H + 5'-deoxyadenosine + L-methionine + A + S-adenosyl-L-homocysteine + 2 H(+). In terms of biological role, catalyzes the methylthiolation of an aspartic acid residue of ribosomal protein uS12. This chain is Ribosomal protein uS12 methylthiotransferase RimO, found in Synechococcus sp. (strain CC9902).